Reading from the N-terminus, the 99-residue chain is UPF0122 protein UU142 (99 aa).

This sequence belongs to the UPF0122 family.

Functionally, might take part in the signal recognition particle (SRP) pathway. This is inferred from the conservation of its genetic proximity to ftsY/ffh. May be a regulatory protein. The chain is UPF0122 protein UU142 from Ureaplasma parvum serovar 3 (strain ATCC 700970).